The following is a 450-amino-acid chain: MGKRLFGTDGLRGQVNIYPMTADVALRLGLAAGTHFRNGNRRHRVVIGKDTRLSGYVFESALTAGLCAAGMDVYLVGPLPTPAIAFLTRNMRADLGVVISASHNPFMDNGIKFFDKDGFKLPDEMENKITDMVLDPDWQWDYPAPERVGRAAKIEDSPGRYIVYLKNSFPAHLTLDGMRVVLDCANGANYKVAPLALEELGAEVIKIGTEPNGLNINHQCGSLYPGVAAGKVLETRADVGLALDGDADRLIVVDEKGTVLDGDQIMALCADDMLRRGALRNNTLVATVMSNMALEVYMKERGCKLLRTPVGDRYVVEAMRREGANLGGEQSGHLIFMDHGTTGDGLMAALQILRIMRERDRPLSELAGQLQLFPQELINVHVERKIPFEQCQPVLDGVAKVEAELGDRGRVLLRYSGTEAVCRVMVEGEDPEQVKRLASLLAETVQKHLR.

The Phosphoserine intermediate role is filled by Ser102. Mg(2+) is bound by residues Ser102, Asp244, Asp246, and Asp248. A Phosphoserine modification is found at Ser102.

This sequence belongs to the phosphohexose mutase family. Mg(2+) serves as cofactor. Activated by phosphorylation.

It catalyses the reaction alpha-D-glucosamine 1-phosphate = D-glucosamine 6-phosphate. In terms of biological role, catalyzes the conversion of glucosamine-6-phosphate to glucosamine-1-phosphate. The polypeptide is Phosphoglucosamine mutase (Nitratidesulfovibrio vulgaris (strain DSM 19637 / Miyazaki F) (Desulfovibrio vulgaris)).